Consider the following 326-residue polypeptide: Malate dehydrogenase (326 aa).

11–17 (GAAGQIG) contacts NAD(+). The substrate site is built by Arg92 and Arg98. Residues Asn105, Gln112, and 129–131 (VGN) each bind NAD(+). Asn131 and Arg162 together coordinate substrate. Catalysis depends on His187, which acts as the Proton acceptor.

It belongs to the LDH/MDH superfamily. MDH type 2 family.

The enzyme catalyses (S)-malate + NAD(+) = oxaloacetate + NADH + H(+). Its function is as follows. Catalyzes the reversible oxidation of malate to oxaloacetate. The polypeptide is Malate dehydrogenase (Halorhodospira halophila (strain DSM 244 / SL1) (Ectothiorhodospira halophila (strain DSM 244 / SL1))).